Consider the following 389-residue polypeptide: Succinyl-diaminopimelate desuccinylase (389 aa).

H72 is a Zn(2+) binding site. The active site involves D74. Position 105 (D105) interacts with Zn(2+). E144 serves as the catalytic Proton acceptor. 3 residues coordinate Zn(2+): E145, E173, and H362.

Belongs to the peptidase M20A family. DapE subfamily. In terms of assembly, homodimer. Zn(2+) serves as cofactor. Co(2+) is required as a cofactor.

The catalysed reaction is N-succinyl-(2S,6S)-2,6-diaminopimelate + H2O = (2S,6S)-2,6-diaminopimelate + succinate. It functions in the pathway amino-acid biosynthesis; L-lysine biosynthesis via DAP pathway; LL-2,6-diaminopimelate from (S)-tetrahydrodipicolinate (succinylase route): step 3/3. Catalyzes the hydrolysis of N-succinyl-L,L-diaminopimelic acid (SDAP), forming succinate and LL-2,6-diaminopimelate (DAP), an intermediate involved in the bacterial biosynthesis of lysine and meso-diaminopimelic acid, an essential component of bacterial cell walls. This is Succinyl-diaminopimelate desuccinylase from Rhodopseudomonas palustris (strain HaA2).